A 162-amino-acid polypeptide reads, in one-letter code: uncharacterized protein (162 aa).

The interval 1–49 (MNSRTASARGWFSSRPPTSESDLEPATDGPASETTTLSPEATTFNDTRI) is disordered. Polar residues predominate over residues 32–46 (SETTTLSPEATTFND). The helical transmembrane segment at 62–82 (MLLSFGIITVIGLAVALVLYI) threads the bilayer.

The protein resides in the membrane. This is an uncharacterized protein from Homo sapiens (Human).